A 356-amino-acid chain; its full sequence is SERTA domain-containing protein 4 (356 aa).

Residues 33-53 (SYGGPSPPGPAQAPLQGDRGA) are disordered. The region spanning 101 to 147 (IFEERAHILYMSLEKLKFIDDPEVYLRRSVLINNLMKRIHGEIIMQN) is the SERTA domain. The segment covering 215–232 (TAASSPSASSSSSSSSSS) has biased composition (low complexity). Disordered regions lie at residues 215–238 (TAAS…LPLP), 280–302 (KLND…HEPV), and 332–356 (WKKS…GSKI). Basic and acidic residues predominate over residues 280 to 292 (KLNDEKANDDTNR).

This is SERTA domain-containing protein 4 (SERTAD4) from Homo sapiens (Human).